Reading from the N-terminus, the 237-residue chain is BTB/POZ domain-containing protein KCTD6 (237 aa).

The interaction with ANK1 isoform Mu7 stretch occupies residues 1-104 (MDNGDWGYMM…FYQIEPLIQC (104 aa)). An interaction with CUL3 region spans residues 10 to 110 (MSDPVTLNVG…LIQCLNDPRP (101 aa)). Positions 12–81 (DPVTLNVGGH…LRTSELTLPL (70 aa)) constitute a BTB domain. The segment at 113 to 187 (PMDTFEEVVE…TFGPCDYHQE (75 aa)) is interaction with USP21.

As to quaternary structure, homopentamer. Interacts with KCTD11; KCTD6 and KCTD11 may associate in heteropentameric assemblies. Interacts (via BTB domain) with CUL3; initially a 4:4 stoichiometry has been reported, however, electron microscopy revealed pentameric states with a five-pointed pinwheel shape. The interaction with CUL3 is indicative for a participation in a BCR (BTB-CUL3-RBX1) E3 ubiquitin-protein ligase complex. Interacts with HDAC1; probably indirect as the interaction requires the presence of KCTD11. Interacts with USP21 (preferentially catalytic inactive form). Interacts with ANK1 isoform Mu7; detected in striated muscle. Interacts with USP11. As to expression, highly expressed in cerebellum and brain.

The protein localises to the cytoplasm. Its subcellular location is the myofibril. The protein resides in the sarcomere. It localises to the m line. Its pathway is protein modification; protein ubiquitination. Its function is as follows. Probable substrate-specific adapter of a BCR (BTB-CUL3-RBX1) E3 ubiquitin-protein ligase complex mediating the ubiquitination and subsequent proteasomal degradation of target proteins. Promotes the ubiquitination of HDAC1; the function seems to depend on KCTD11:KCTD6 oligomerization. Can function as antagonist of the Hedgehog pathway by affecting the nuclear transfer of transcription factor GLI1; the function probably occurs via HDAC1 down-regulation, keeping GLI1 acetylated and inactive. Inhibits cell growth and tumorigenicity of medulloblastoma (MDB). Involved in regulating protein levels of ANK1 isoform Mu7 probably implicating CUL3-dependent proteasomal degradation. In Mus musculus (Mouse), this protein is BTB/POZ domain-containing protein KCTD6 (Kctd6).